The chain runs to 483 residues: Altronate oxidoreductase (483 aa).

18 to 29 (IIQFGEGNFLRA) serves as a coordination point for NAD(+).

This sequence belongs to the mannitol dehydrogenase family. UxaB subfamily.

It carries out the reaction D-altronate + NAD(+) = keto-D-tagaturonate + NADH + H(+). It functions in the pathway carbohydrate metabolism; pentose and glucuronate interconversion. The protein is Altronate oxidoreductase of Yersinia pestis.